The chain runs to 379 residues: Succinyl-diaminopimelate desuccinylase (379 aa).

His-70 is a Zn(2+) binding site. Residue Asp-72 is part of the active site. Asp-103 serves as a coordination point for Zn(2+). The Proton acceptor role is filled by Glu-137. Positions 138, 166, and 352 each coordinate Zn(2+).

The protein belongs to the peptidase M20A family. DapE subfamily. As to quaternary structure, homodimer. Zn(2+) serves as cofactor. Co(2+) is required as a cofactor.

It catalyses the reaction N-succinyl-(2S,6S)-2,6-diaminopimelate + H2O = (2S,6S)-2,6-diaminopimelate + succinate. The protein operates within amino-acid biosynthesis; L-lysine biosynthesis via DAP pathway; LL-2,6-diaminopimelate from (S)-tetrahydrodipicolinate (succinylase route): step 3/3. Catalyzes the hydrolysis of N-succinyl-L,L-diaminopimelic acid (SDAP), forming succinate and LL-2,6-diaminopimelate (DAP), an intermediate involved in the bacterial biosynthesis of lysine and meso-diaminopimelic acid, an essential component of bacterial cell walls. The sequence is that of Succinyl-diaminopimelate desuccinylase from Burkholderia cenocepacia (strain HI2424).